Consider the following 963-residue polypeptide: Adhesion G protein-coupled receptor D2 (963 aa).

At 1–662 (MDAPWGAGER…EEESLLRTLS (662 aa)) the chain is on the extracellular side. Positions 18–38 (DRSGVSLGPPPTPQVNQGTLG) are disordered. One can recognise a Pentraxin (PTX) domain in the interval 116–325 (TTAVLVFDER…LPTVWVRLLC (210 aa)). A disulfide bridge connects residues cysteine 146 and cysteine 212. A glycan (N-linked (GlcNAc...) asparagine) is linked at asparagine 271. The GAIN-B domain occupies 489–649 (MALVASVQRL…AILLQIYEVQ (161 aa)). The GPS stretch occupies residues 599-649 (PLFPPHPPSPYTGGAWATTGCSVAALYLDSTACFCNHSTSFAILLQIYEVQ). An intrachain disulfide couples cysteine 619 to cysteine 633. The N-linked (GlcNAc...) asparagine glycan is linked to asparagine 634. A helical transmembrane segment spans residues 663–683 (FVGCGVSFCALTTTFLLFLVA). Topologically, residues 684-691 (GVPKSERT) are cytoplasmic. The helical transmembrane segment at 692–712 (TVHKNLTFSLASAEGFLMTSE) threads the bilayer. Over 713–720 (WAKANEVA) the chain is Extracellular. The helical transmembrane segment at 721–741 (CVAVTVAMHFLFLVAFSWMLV) threads the bilayer. The Cytoplasmic segment spans residues 742 to 762 (EGLLLWRKVVAVSMHPGPGMR). A helical membrane pass occupies residues 763–783 (LYHATGWGVPVGIVAVTLAML). The Extracellular segment spans residues 784–800 (PHDYVAPGHCWLNVHTN). The chain crosses the membrane as a helical span at residues 801 to 821 (AIWAFVGPVLFVLTANTCILA). The Cytoplasmic segment spans residues 822-857 (RVVMITVSSARRRARMLSPQPCLQQQIWTQIWATVK). Residues 858-878 (PVLVLLPVLGLTWLAGILVHL) traverse the membrane as a helical segment. Residues 879 to 880 (SP) lie on the Extracellular side of the membrane. The chain crosses the membrane as a helical span at residues 881–901 (AWAYAAVGLNSIQGLYIFLVY). Over 902–963 (AACNEEVRSA…TPRHPLKAPA (62 aa)) the chain is Cytoplasmic.

This sequence belongs to the G-protein coupled receptor 2 family. Adhesion G-protein coupled receptor (ADGR) subfamily.

The protein resides in the membrane. Its function is as follows. Orphan receptor. This chain is Adhesion G protein-coupled receptor D2 (ADGRD2), found in Homo sapiens (Human).